A 164-amino-acid polypeptide reads, in one-letter code: V-type proton ATPase subunit c' (164 aa).

Over 1–14 the chain is Vacuolar; the sequence is MSTQLASNIYAPLY. A helical membrane pass occupies residues 15–37; sequence APFFGFAGCAAAMVLSCLGAAIG. Residues 38–59 are Cytoplasmic-facing; sequence TAKSGIGIAGIGTFKPELIMKS. The chain crosses the membrane as a helical span at residues 60–80; it reads LIPVVMSGILAIYGLVVAVLI. The Vacuolar portion of the chain corresponds to 81–98; sequence AGNLSPTEDYTLFNGFMH. Residues 99–120 traverse the membrane as a helical segment; it reads LSCGLCVGFACLSSGYAIGMVG. Residues 121–132 are Cytoplasmic-facing; the sequence is DVGVRKYMHQPR. A helical membrane pass occupies residues 133-158; sequence LFVGIVLILIFSEVLGLYGMIVALIL. Residues 159 to 164 are Vacuolar-facing; sequence NTRGSE.

It belongs to the V-ATPase proteolipid subunit family. As to quaternary structure, V-ATPase is a heteromultimeric enzyme composed of a peripheral catalytic V1 complex (components A to H) attached to an integral membrane V0 proton pore complex (components: a, c, c', c'', d, e, f and VOA1). The decameric c-ring forms the proton-conducting pore, and is composed of eight proteolipid subunits c, one subunit c' and one subunit c''.

Its subcellular location is the vacuole membrane. Its function is as follows. Proton-conducting pore forming subunit of the V0 complex of vacuolar(H+)-ATPase (V-ATPase), a multisubunit enzyme composed of a peripheral complex (V1) that hydrolyzes ATP and a membrane integral complex (V0) that translocates protons. V-ATPase is responsible for acidifying and maintaining the pH of intracellular compartments. In Saccharomyces cerevisiae (strain ATCC 204508 / S288c) (Baker's yeast), this protein is V-type proton ATPase subunit c' (VMA11).